The sequence spans 416 residues: Glutamyl-tRNA reductase (416 aa).

Substrate is bound by residues 51-54 (TCNR), serine 110, 115-117 (EPQ), and glutamine 121. Catalysis depends on cysteine 52, which acts as the Nucleophile. 190–195 (GAGQTG) is an NADP(+) binding site.

Belongs to the glutamyl-tRNA reductase family. As to quaternary structure, homodimer.

It carries out the reaction (S)-4-amino-5-oxopentanoate + tRNA(Glu) + NADP(+) = L-glutamyl-tRNA(Glu) + NADPH + H(+). The protein operates within porphyrin-containing compound metabolism; protoporphyrin-IX biosynthesis; 5-aminolevulinate from L-glutamyl-tRNA(Glu): step 1/2. Its function is as follows. Catalyzes the NADPH-dependent reduction of glutamyl-tRNA(Glu) to glutamate 1-semialdehyde (GSA). This chain is Glutamyl-tRNA reductase, found in Francisella tularensis subsp. tularensis (strain FSC 198).